The chain runs to 176 residues: Nicotinamide-nucleotide adenylyltransferase (176 aa).

Belongs to the archaeal NMN adenylyltransferase family.

It localises to the cytoplasm. The catalysed reaction is beta-nicotinamide D-ribonucleotide + ATP + H(+) = diphosphate + NAD(+). It participates in cofactor biosynthesis; NAD(+) biosynthesis; NAD(+) from nicotinamide D-ribonucleotide: step 1/1. The polypeptide is Nicotinamide-nucleotide adenylyltransferase (Halorubrum lacusprofundi (strain ATCC 49239 / DSM 5036 / JCM 8891 / ACAM 34)).